A 273-amino-acid chain; its full sequence is Phosphate import ATP-binding protein PstB (273 aa).

The 240-residue stretch at 19-258 (LSLQNVTISY…FNDTDKIFNA (240 aa)) folds into the ABC transporter domain. Residue 51 to 58 (GPSGCGKS) coordinates ATP.

It belongs to the ABC transporter superfamily. Phosphate importer (TC 3.A.1.7) family. As to quaternary structure, the complex is composed of two ATP-binding proteins (PstB), two transmembrane proteins (PstC and PstA) and a solute-binding protein (PstS).

The protein resides in the cell inner membrane. It catalyses the reaction phosphate(out) + ATP + H2O = ADP + 2 phosphate(in) + H(+). In terms of biological role, part of the ABC transporter complex PstSACB involved in phosphate import. Responsible for energy coupling to the transport system. This Synechococcus sp. (strain CC9605) protein is Phosphate import ATP-binding protein PstB.